Consider the following 160-residue polypeptide: MSYNCCSRNFSSRSFGGYLYYPGSYPSSLVYSTALCSPSTCQLRSSLYRDCQKTCWEPASCQKSCYRPRTSILCCPCQTTCSGSLGFRSSSCRSQGYGSRCCYSLGNGSSGFRFLKYGGCGFPSLSYGSRFCYPNYLASGAWQSSCYRPICGSRFYQFTC.

4 repeat units span residues 41–50 (CQLRSSLYRD), 51–60 (CQKTCWEPAS), 61–70 (CQKSCYRPRT), and 77–86 (CQTTCSGSLG). Residues 41-86 (CQLRSSLYRDCQKTCWEPASCQKSCYRPRTSILCCPCQTTCSGSLG) form a 4 X 10 AA approximate repeats region.

This sequence belongs to the PMG family. In terms of assembly, interacts with hair keratins.

Functionally, in the hair cortex, hair keratin intermediate filaments are embedded in an interfilamentous matrix, consisting of hair keratin-associated proteins (KRTAP), which are essential for the formation of a rigid and resistant hair shaft through their extensive disulfide bond cross-linking with abundant cysteine residues of hair keratins. The matrix proteins include the high-sulfur and high-glycine-tyrosine keratins. In Homo sapiens (Human), this protein is Keratin-associated protein 13-4 (KRTAP13-4).